Consider the following 123-residue polypeptide: Large ribosomal subunit protein uL29 (123 aa).

It belongs to the universal ribosomal protein uL29 family. Component of the large ribosomal subunit.

The protein resides in the cytoplasm. Its function is as follows. Component of the large ribosomal subunit. The ribosome is a large ribonucleoprotein complex responsible for the synthesis of proteins in the cell. This Xenopus tropicalis (Western clawed frog) protein is Large ribosomal subunit protein uL29 (rpl35).